We begin with the raw amino-acid sequence, 701 residues long: Glycine--tRNA ligase beta subunit (701 aa).

This sequence belongs to the class-II aminoacyl-tRNA synthetase family. Tetramer of two alpha and two beta subunits.

The protein resides in the cytoplasm. It carries out the reaction tRNA(Gly) + glycine + ATP = glycyl-tRNA(Gly) + AMP + diphosphate. The protein is Glycine--tRNA ligase beta subunit of Anaeromyxobacter dehalogenans (strain 2CP-1 / ATCC BAA-258).